The primary structure comprises 397 residues: Sexual differentiation process protein isp7 (397 aa).

A Fe2OG dioxygenase domain is found at 255-353 (PTTSIRLLRY…RYTIPFFLQG (99 aa)).

This sequence belongs to the iron/ascorbate-dependent oxidoreductase family.

In Schizosaccharomyces pombe (strain 972 / ATCC 24843) (Fission yeast), this protein is Sexual differentiation process protein isp7 (isp7).